We begin with the raw amino-acid sequence, 118 residues long: MARIAGINIPDQKHTVIALTAIFGIGRTRARAICASTAIAETAKIKELSEAQIDILREEVAKYSVEGDLRREISMNIKRLMDLGCYRGLRHRRSLPLRGQRTKTNARTRKGPRKPIRK.

The disordered stretch occupies residues 94 to 118 (SLPLRGQRTKTNARTRKGPRKPIRK).

This sequence belongs to the universal ribosomal protein uS13 family. As to quaternary structure, part of the 30S ribosomal subunit. Forms a loose heterodimer with protein S19. Forms two bridges to the 50S subunit in the 70S ribosome.

Its function is as follows. Located at the top of the head of the 30S subunit, it contacts several helices of the 16S rRNA. In the 70S ribosome it contacts the 23S rRNA (bridge B1a) and protein L5 of the 50S subunit (bridge B1b), connecting the 2 subunits; these bridges are implicated in subunit movement. Contacts the tRNAs in the A and P-sites. The sequence is that of Small ribosomal subunit protein uS13 from Shewanella denitrificans (strain OS217 / ATCC BAA-1090 / DSM 15013).